Consider the following 102-residue polypeptide: Protein translation factor SUI1 homolog (102 aa).

The protein belongs to the SUI1 family.

This chain is Protein translation factor SUI1 homolog, found in Methanococcus vannielii.